Reading from the N-terminus, the 556-residue chain is PPE family protein PPE2 (556 aa).

The tract at residues 8–164 is PPE; the sequence is ASPPEVHSAL…ASYQAVSTAA (157 aa). The segment at 201 to 256 is SH3-like; sequence QKIGYTDFYNNVIQPFINWLTNLPFLQAMFSGFDPWLPSLGNPLTFLSPANIAFAL. Residues 319 to 340 form a leucine zipper motif region; the sequence is LEQTLALLPAALPLLAAPLAPL. Disordered regions lie at residues 385–418 and 443–556; these read TPTP…PPVT and GTGV…TRVE. Residues 400-417 are compositionally biased toward pro residues; sequence PTPPLGPPPPPVTAPPPV. The segment covering 456–471 has biased composition (low complexity); that stretch reads AEAPASAAAPEEQVQP. The span at 472-481 shows a compositional bias: basic residues; the sequence is QRRRRPKIKQ. The short motif at 473-481 is the Nuclear localization signal element; sequence RRRRPKIKQ.

The protein belongs to the mycobacterial PPE family.

The protein resides in the secreted. Its subcellular location is the host cytoplasm. The protein localises to the host nucleus. Its function is as follows. Inhibits nitric oxide (NO) production in activated macrophages. Acts by inhibiting expression of the host inducible nitric oxide synthase (iNOS). PPE2 is translocated into the host macrophage nucleus, where it interacts with a GATA-binding site overlapping with the TATA box of NOS2 (iNOS) promoter, and strongly inhibits NOS2 gene transcription. Reduction in NO production in turn facilitates intracellular survival of the bacilli inside the macrophage. In addition, disrupts the assembly of NADPH oxidase complex, which inhibits NADPH oxidase-mediated reactive oxygen species (ROS) generation in macrophages and favors M.tuberculosis survival. Acts by interacting with NCF2, the cytosolic subunit of NADPH oxidase, and preventing translocation of NCF2 and NCF1 to the membrane, which causes a reduction of the functional assembly of NADPH oxidase complex and a decrease in NADPH oxidase activity. This Mycobacterium tuberculosis (strain CDC 1551 / Oshkosh) protein is PPE family protein PPE2 (PPE2).